We begin with the raw amino-acid sequence, 82 residues long: ATP synthase subunit c, chloroplastic (82 aa).

2 consecutive transmembrane segments (helical) span residues 3–23 (PIVA…AAIG) and 57–77 (FAFM…LLFA).

It belongs to the ATPase C chain family. As to quaternary structure, F-type ATPases have 2 components, F(1) - the catalytic core - and F(0) - the membrane proton channel. F(1) has five subunits: alpha(3), beta(3), gamma(1), delta(1), epsilon(1). F(0) has four main subunits: a(1), b(1), b'(1) and c(10-14). The alpha and beta chains form an alternating ring which encloses part of the gamma chain. F(1) is attached to F(0) by a central stalk formed by the gamma and epsilon chains, while a peripheral stalk is formed by the delta, b and b' chains.

The protein localises to the plastid. Its subcellular location is the chloroplast thylakoid membrane. In terms of biological role, f(1)F(0) ATP synthase produces ATP from ADP in the presence of a proton or sodium gradient. F-type ATPases consist of two structural domains, F(1) containing the extramembraneous catalytic core and F(0) containing the membrane proton channel, linked together by a central stalk and a peripheral stalk. During catalysis, ATP synthesis in the catalytic domain of F(1) is coupled via a rotary mechanism of the central stalk subunits to proton translocation. Key component of the F(0) channel; it plays a direct role in translocation across the membrane. A homomeric c-ring of between 10-14 subunits forms the central stalk rotor element with the F(1) delta and epsilon subunits. The sequence is that of ATP synthase subunit c, chloroplastic from Chlorella vulgaris (Green alga).